We begin with the raw amino-acid sequence, 150 residues long: MSEARLMARDVIKTVPHDQVPQPPVASETPSMKEPVRDVDLMECVEGRNQVALRLACIGDEMDLCLRSPRLVQLPGIAIHRLAVTYSRTGVRGIFRSLIRSLTNLRENIWSWRVLTPGAWVSPDQDPGQLFPMVLLVFLLLGGAWYLQLQ.

Residues 51 to 65 (VALRLACIGDEMDLC) carry the BH3 motif. Residues 127–147 (PGQLFPMVLLVFLLLGGAWYL) form a helical membrane-spanning segment. The leucine-zipper stretch occupies residues 127-148 (PGQLFPMVLLVFLLLGGAWYLQ).

As to quaternary structure, interacts with RHBDL4/RHBDD1. Interacts with BCL2L10/BCL-B. In terms of processing, proteolytically cleaved by RHBDL4/RHBDD1. RHBDL4/RHBDD1-induced cleavage is a necessary step prior its degradation by the proteosome-dependent mechanism. Post-translationally, ubiquitinated by the ECS(ASB11) complex in response to endoplasmic reticulum stress, leading to substrate recognition by the segregase p97/VCP and degradation by the proteasome. In terms of tissue distribution, expressed in testis, kidney, liver, lung and heart.

The protein resides in the endomembrane system. It localises to the mitochondrion membrane. Functionally, accelerates programmed cell death. Binding to the apoptosis repressors Bcl-X(L), BHRF1 or Bcl-2 suppresses this death-promoting activity. This is Bcl-2-interacting killer (Bik) from Mus musculus (Mouse).